Consider the following 573-residue polypeptide: Proline--tRNA ligase (573 aa).

This sequence belongs to the class-II aminoacyl-tRNA synthetase family. ProS type 1 subfamily. In terms of assembly, homodimer.

The protein localises to the cytoplasm. The catalysed reaction is tRNA(Pro) + L-proline + ATP = L-prolyl-tRNA(Pro) + AMP + diphosphate. Catalyzes the attachment of proline to tRNA(Pro) in a two-step reaction: proline is first activated by ATP to form Pro-AMP and then transferred to the acceptor end of tRNA(Pro). As ProRS can inadvertently accommodate and process non-cognate amino acids such as alanine and cysteine, to avoid such errors it has two additional distinct editing activities against alanine. One activity is designated as 'pretransfer' editing and involves the tRNA(Pro)-independent hydrolysis of activated Ala-AMP. The other activity is designated 'posttransfer' editing and involves deacylation of mischarged Ala-tRNA(Pro). The misacylated Cys-tRNA(Pro) is not edited by ProRS. This chain is Proline--tRNA ligase, found in Cupriavidus necator (strain ATCC 17699 / DSM 428 / KCTC 22496 / NCIMB 10442 / H16 / Stanier 337) (Ralstonia eutropha).